A 194-amino-acid chain; its full sequence is dTTP/UTP pyrophosphatase (194 aa).

The Proton acceptor role is filled by Asp66.

The protein belongs to the Maf family. YhdE subfamily. Requires a divalent metal cation as cofactor.

The protein localises to the cytoplasm. It carries out the reaction dTTP + H2O = dTMP + diphosphate + H(+). It catalyses the reaction UTP + H2O = UMP + diphosphate + H(+). Functionally, nucleoside triphosphate pyrophosphatase that hydrolyzes dTTP and UTP. May have a dual role in cell division arrest and in preventing the incorporation of modified nucleotides into cellular nucleic acids. The polypeptide is dTTP/UTP pyrophosphatase (Anaeromyxobacter dehalogenans (strain 2CP-C)).